Reading from the N-terminus, the 162-residue chain is Regulatory protein RecX (162 aa).

Belongs to the RecX family.

The protein localises to the cytoplasm. In terms of biological role, modulates RecA activity. The chain is Regulatory protein RecX from Xanthomonas campestris pv. campestris (strain 8004).